The chain runs to 268 residues: NH(3)-dependent NAD(+) synthetase (268 aa).

Residue 46–53 (GVSGGQDS) participates in ATP binding. Asp52 is a binding site for Mg(2+). Arg140 is a deamido-NAD(+) binding site. Thr160 serves as a coordination point for ATP. Residue Glu165 coordinates Mg(2+). Deamido-NAD(+) is bound by residues Lys173 and Asp180. Lys189 contributes to the ATP binding site. 260-261 (HK) contributes to the deamido-NAD(+) binding site.

This sequence belongs to the NAD synthetase family. As to quaternary structure, homodimer.

The enzyme catalyses deamido-NAD(+) + NH4(+) + ATP = AMP + diphosphate + NAD(+) + H(+). The protein operates within cofactor biosynthesis; NAD(+) biosynthesis; NAD(+) from deamido-NAD(+) (ammonia route): step 1/1. Its function is as follows. Catalyzes the ATP-dependent amidation of deamido-NAD to form NAD. Uses ammonia as a nitrogen source. This chain is NH(3)-dependent NAD(+) synthetase, found in Buchnera aphidicola subsp. Acyrthosiphon pisum (strain Tuc7).